Reading from the N-terminus, the 434-residue chain is ATP phosphoribosyltransferase regulatory subunit (434 aa).

It belongs to the class-II aminoacyl-tRNA synthetase family. HisZ subfamily. Heteromultimer composed of HisG and HisZ subunits.

It localises to the cytoplasm. It functions in the pathway amino-acid biosynthesis; L-histidine biosynthesis; L-histidine from 5-phospho-alpha-D-ribose 1-diphosphate: step 1/9. Required for the first step of histidine biosynthesis. May allow the feedback regulation of ATP phosphoribosyltransferase activity by histidine. The sequence is that of ATP phosphoribosyltransferase regulatory subunit from Geobacter metallireducens (strain ATCC 53774 / DSM 7210 / GS-15).